Reading from the N-terminus, the 372-residue chain is Queuine tRNA-ribosyltransferase (372 aa).

The Proton acceptor role is filled by aspartate 92. Substrate is bound by residues 92-96 (DSGGY), aspartate 146, glutamine 188, and glycine 215. The tract at residues 246 to 252 (GIGSLRE) is RNA binding. Residue aspartate 265 is the Nucleophile of the active site. The segment at 270–274 (TRLGR) is RNA binding; important for wobble base 34 recognition. Zn(2+)-binding residues include cysteine 303, cysteine 305, cysteine 308, and histidine 334.

This sequence belongs to the queuine tRNA-ribosyltransferase family. As to quaternary structure, homodimer. Within each dimer, one monomer is responsible for RNA recognition and catalysis, while the other monomer binds to the replacement base PreQ1. Zn(2+) serves as cofactor.

The catalysed reaction is 7-aminomethyl-7-carbaguanine + guanosine(34) in tRNA = 7-aminomethyl-7-carbaguanosine(34) in tRNA + guanine. The protein operates within tRNA modification; tRNA-queuosine biosynthesis. Catalyzes the base-exchange of a guanine (G) residue with the queuine precursor 7-aminomethyl-7-deazaguanine (PreQ1) at position 34 (anticodon wobble position) in tRNAs with GU(N) anticodons (tRNA-Asp, -Asn, -His and -Tyr). Catalysis occurs through a double-displacement mechanism. The nucleophile active site attacks the C1' of nucleotide 34 to detach the guanine base from the RNA, forming a covalent enzyme-RNA intermediate. The proton acceptor active site deprotonates the incoming PreQ1, allowing a nucleophilic attack on the C1' of the ribose to form the product. After dissociation, two additional enzymatic reactions on the tRNA convert PreQ1 to queuine (Q), resulting in the hypermodified nucleoside queuosine (7-(((4,5-cis-dihydroxy-2-cyclopenten-1-yl)amino)methyl)-7-deazaguanosine). The polypeptide is Queuine tRNA-ribosyltransferase (Prochlorococcus marinus (strain MIT 9215)).